The following is a 268-amino-acid chain: Ribosomal RNA small subunit methyltransferase A (268 aa).

Residues N18, L20, G45, E66, D91, and N112 each contribute to the S-adenosyl-L-methionine site.

The protein belongs to the class I-like SAM-binding methyltransferase superfamily. rRNA adenine N(6)-methyltransferase family. RsmA subfamily.

The protein localises to the cytoplasm. The enzyme catalyses adenosine(1518)/adenosine(1519) in 16S rRNA + 4 S-adenosyl-L-methionine = N(6)-dimethyladenosine(1518)/N(6)-dimethyladenosine(1519) in 16S rRNA + 4 S-adenosyl-L-homocysteine + 4 H(+). Functionally, specifically dimethylates two adjacent adenosines (A1518 and A1519) in the loop of a conserved hairpin near the 3'-end of 16S rRNA in the 30S particle. May play a critical role in biogenesis of 30S subunits. This is Ribosomal RNA small subunit methyltransferase A from Shewanella sp. (strain MR-7).